The primary structure comprises 234 residues: Leucyl/phenylalanyl-tRNA--protein transferase (234 aa).

The protein belongs to the L/F-transferase family.

Its subcellular location is the cytoplasm. It carries out the reaction N-terminal L-lysyl-[protein] + L-leucyl-tRNA(Leu) = N-terminal L-leucyl-L-lysyl-[protein] + tRNA(Leu) + H(+). The catalysed reaction is N-terminal L-arginyl-[protein] + L-leucyl-tRNA(Leu) = N-terminal L-leucyl-L-arginyl-[protein] + tRNA(Leu) + H(+). The enzyme catalyses L-phenylalanyl-tRNA(Phe) + an N-terminal L-alpha-aminoacyl-[protein] = an N-terminal L-phenylalanyl-L-alpha-aminoacyl-[protein] + tRNA(Phe). In terms of biological role, functions in the N-end rule pathway of protein degradation where it conjugates Leu, Phe and, less efficiently, Met from aminoacyl-tRNAs to the N-termini of proteins containing an N-terminal arginine or lysine. This Klebsiella pneumoniae (strain 342) protein is Leucyl/phenylalanyl-tRNA--protein transferase.